A 953-amino-acid chain; its full sequence is Nonsense-mediated mRNA decay factor SMG8 (953 aa).

Disordered regions lie at residues 571–604 and 629–653; these read AEDAELDPDEEDEELPTGEREEQHITQSNGCSQP and PCFDQSSSSEAESTCSGTSSEESNT. Residues 573 to 586 are compositionally biased toward acidic residues; it reads DAELDPDEEDEELP. Residues 595 to 604 show a composition bias toward polar residues; sequence ITQSNGCSQP. The span at 634–653 shows a compositional bias: low complexity; the sequence is SSSSEAESTCSGTSSEESNT.

Belongs to the SMG8 family.

Its function is as follows. Involved in nonsense-mediated decay (NMD) of mRNAs containing premature stop codons. Probable component of kinase complex containing nonC and recruited to stalled ribosomes. The sequence is that of Nonsense-mediated mRNA decay factor SMG8 from Drosophila pseudoobscura pseudoobscura (Fruit fly).